The following is a 330-amino-acid chain: DNA-directed RNA polymerase subunit alpha (330 aa).

The segment at 1–237 (MYTEINEMLT…RQLHAFVDMK (237 aa)) is alpha N-terminal domain (alpha-NTD). Positions 251–330 (FDPVLLRSVD…ENWPPASLGE (80 aa)) are alpha C-terminal domain (alpha-CTD).

This sequence belongs to the RNA polymerase alpha chain family. Homodimer. The RNAP catalytic core consists of 2 alpha, 1 beta, 1 beta' and 1 omega subunit. When a sigma factor is associated with the core the holoenzyme is formed, which can initiate transcription.

It carries out the reaction RNA(n) + a ribonucleoside 5'-triphosphate = RNA(n+1) + diphosphate. Functionally, DNA-dependent RNA polymerase catalyzes the transcription of DNA into RNA using the four ribonucleoside triphosphates as substrates. This Legionella pneumophila subsp. pneumophila (strain Philadelphia 1 / ATCC 33152 / DSM 7513) protein is DNA-directed RNA polymerase subunit alpha.